The primary structure comprises 40 residues: Peroxisomal LYS1 stabilizing protein 1 (40 aa).

Positions 1 to 10 (MTAKTKQSWN) are enriched in polar residues. The disordered stretch occupies residues 1-20 (MTAKTKQSWNKGIWENGKQG).

The protein resides in the cytoplasm. Its subcellular location is the cytosol. It is found in the peroxisome matrix. Modulates the lysine biosynthesis pathway, possibly by stabilizing the lysine biosynthesis LYS1 protein in lysine-deplete conditions. This is Peroxisomal LYS1 stabilizing protein 1 from Saccharomyces cerevisiae (strain ATCC 204508 / S288c) (Baker's yeast).